Consider the following 119-residue polypeptide: Large ribosomal subunit protein bL20 (119 aa).

It belongs to the bacterial ribosomal protein bL20 family.

Functionally, binds directly to 23S ribosomal RNA and is necessary for the in vitro assembly process of the 50S ribosomal subunit. It is not involved in the protein synthesizing functions of that subunit. The chain is Large ribosomal subunit protein bL20 from Shewanella frigidimarina (strain NCIMB 400).